Here is a 297-residue protein sequence, read N- to C-terminus: Glucuronoxylan 4-O-methyltransferase 3 (297 aa).

The helical transmembrane segment at 9 to 29 threads the bilayer; the sequence is LNLKVIFIGSSILILIIIYLA. Low complexity predominate over residues 35–47; it reads SSSSKPISKTNLS. The tract at residues 35 to 63 is disordered; the sequence is SSSSKPISKTNLSQEEEETQHKQEGCPTT.

Belongs to the methyltransferase superfamily. In terms of tissue distribution, expressed in hypocotyls, roots, rosette leaves, stems and siliques.

It is found in the golgi apparatus membrane. The catalysed reaction is glucuronoxylan D-glucuronate + n S-adenosyl-L-methionine = glucuronoxylan 4-O-methyl-D-glucuronate + n S-adenosyl-L-homocysteine + n H(+). Methyltransferase catalyzing 4-O-methylation of glucuronic acid side chains on xylan. In Arabidopsis thaliana (Mouse-ear cress), this protein is Glucuronoxylan 4-O-methyltransferase 3 (GXM3).